The sequence spans 459 residues: tRNA-2-methylthio-N(6)-dimethylallyladenosine synthase (459 aa).

The MTTase N-terminal domain occupies 1-116 (MRAHLITYGC…IGKALETNER (116 aa)). [4Fe-4S] cluster is bound by residues cysteine 10, cysteine 46, cysteine 79, cysteine 148, cysteine 152, and cysteine 155. In terms of domain architecture, Radical SAM core spans 134–367 (PQGKLQAHLT…IAKQKEWSAR (234 aa)). The TRAM domain occupies 370-433 (AAKVGTIQEV…PHMLYGRLIG (64 aa)).

Belongs to the methylthiotransferase family. MiaB subfamily. In terms of assembly, monomer. [4Fe-4S] cluster is required as a cofactor.

The protein resides in the cytoplasm. The enzyme catalyses N(6)-dimethylallyladenosine(37) in tRNA + (sulfur carrier)-SH + AH2 + 2 S-adenosyl-L-methionine = 2-methylsulfanyl-N(6)-dimethylallyladenosine(37) in tRNA + (sulfur carrier)-H + 5'-deoxyadenosine + L-methionine + A + S-adenosyl-L-homocysteine + 2 H(+). Functionally, catalyzes the methylthiolation of N6-(dimethylallyl)adenosine (i(6)A), leading to the formation of 2-methylthio-N6-(dimethylallyl)adenosine (ms(2)i(6)A) at position 37 in tRNAs that read codons beginning with uridine. The chain is tRNA-2-methylthio-N(6)-dimethylallyladenosine synthase from Deinococcus geothermalis (strain DSM 11300 / CIP 105573 / AG-3a).